Reading from the N-terminus, the 351-residue chain is Photosystem II D2 protein (351 aa).

A helical membrane pass occupies residues 39-59; the sequence is TAYLAIGGWLTGTTFVTSWYT. His116 is a chlorophyll a binding site. Residues 123 to 139 form a helical membrane-spanning segment; sequence GFMLRQFEIARLVGIRP. The pheophytin a site is built by Gln128 and Asn141. Residues 151–164 form a helical membrane-spanning segment; the sequence is VFVSVFLMYPLGQS. His196 contacts chlorophyll a. Residues 206-226 traverse the membrane as a helical segment; the sequence is GALLCAIHGATVENTLFEDGE. A plastoquinone-binding residues include His213 and Phe260. His213 provides a ligand contact to Fe cation. Residue His267 participates in Fe cation binding. A helical transmembrane segment spans residues 277 to 293; that stretch reads GLWTSSIGIIGLALNLR.

The protein belongs to the reaction center PufL/M/PsbA/D family. PSII is composed of 1 copy each of membrane proteins PsbA, PsbB, PsbC, PsbD, PsbE, PsbF, PsbH, PsbI, PsbJ, PsbK, PsbL, PsbM, PsbT, PsbX, PsbY, PsbZ, Psb30/Ycf12, peripheral proteins PsbO, CyanoQ (PsbQ), PsbU, PsbV and a large number of cofactors. It forms dimeric complexes. Requires The D1/D2 heterodimer binds P680, chlorophylls that are the primary electron donor of PSII, and subsequent electron acceptors. It shares a non-heme iron and each subunit binds pheophytin, quinone, additional chlorophylls, carotenoids and lipids. There is also a Cl(-1) ion associated with D1 and D2, which is required for oxygen evolution. The PSII complex binds additional chlorophylls, carotenoids and specific lipids. as cofactor.

It localises to the cellular thylakoid membrane. The catalysed reaction is 2 a plastoquinone + 4 hnu + 2 H2O = 2 a plastoquinol + O2. Functionally, photosystem II (PSII) is a light-driven water:plastoquinone oxidoreductase that uses light energy to abstract electrons from H(2)O, generating O(2) and a proton gradient subsequently used for ATP formation. It consists of a core antenna complex that captures photons, and an electron transfer chain that converts photonic excitation into a charge separation. The D1/D2 (PsbA/PsbD) reaction center heterodimer binds P680, the primary electron donor of PSII as well as several subsequent electron acceptors. D2 is needed for assembly of a stable PSII complex. This is Photosystem II D2 protein from Synechococcus sp. (strain CC9605).